A 378-amino-acid chain; its full sequence is Cytochrome b (378 aa).

Transmembrane regions (helical) follow at residues 33–53 (SGSL…FLSM), 77–98 (WLIR…YFHI), 113–133 (XNVG…GYVL), and 178–198 (FFAF…IHLI). Residues His-83 and His-97 each coordinate heme b. His-196 lines the heme b pocket. Position 201 (His-201) interacts with a ubiquinone. The next 4 membrane-spanning stretches (helical) occupy residues 226–246 (FKDL…ALFS), 288–308 (LGGV…PILH), 320–340 (LTQF…WIGG), and 347–367 (FIII…VLFP).

This sequence belongs to the cytochrome b family. The cytochrome bc1 complex contains 3 respiratory subunits (MT-CYB, CYC1 and UQCRFS1), 2 core proteins (UQCRC1 and UQCRC2) and probably 6 low-molecular weight proteins. Requires heme b as cofactor.

Its subcellular location is the mitochondrion inner membrane. In terms of biological role, component of the ubiquinol-cytochrome c reductase complex (complex III or cytochrome b-c1 complex) that is part of the mitochondrial respiratory chain. The b-c1 complex mediates electron transfer from ubiquinol to cytochrome c. Contributes to the generation of a proton gradient across the mitochondrial membrane that is then used for ATP synthesis. In Nannacara anomala (Goldeneye cichlid), this protein is Cytochrome b (mt-cyb).